Here is a 508-residue protein sequence, read N- to C-terminus: ADP-ribosylarginine hydrolase CG3568 (508 aa).

12 residues coordinate ADP-D-ribose: Arg-209, Gly-349, Gly-351, Gly-353, Val-354, Trp-355, Trp-390, Asp-441, Asn-448, Glu-449, Gly-459, and Asp-460.

The enzyme catalyses N(omega)-(ADP-D-ribosyl)-L-arginyl-[protein] + H2O = ADP-D-ribose + L-arginyl-[protein]. It catalyses the reaction N(omega)-(ADP-D-ribosyl)-L-arginine + H2O = ADP-D-ribose + L-arginine. Its function is as follows. Protein ADP-ribosyl hydrolase that specifically removes mono-ADP-ribosyl modifications from protein arginine residues. The protein is ADP-ribosylarginine hydrolase CG3568 of Drosophila melanogaster (Fruit fly).